A 729-amino-acid chain; its full sequence is Cytoplasmic polyadenylation element-binding protein 4 (729 aa).

Disordered regions lie at residues 20–49 and 78–133; these read FPVR…NNNT and EKAK…KEKI. Residues 24-35 show a composition bias toward basic residues; the sequence is FHPHLQPPHHHQ. Residues 83-96 show a composition bias toward low complexity; the sequence is QQQEQQDPLEKQQL. 3 positions are modified to phosphoserine: S97, S99, and S137. The interval 218–328 is disordered; it reads FGGSFSPQIG…RGLNGGITPL (111 aa). Positions 232–249 are enriched in basic residues; the sequence is HHPHHPHFQHHHSQHQQQ. Phosphoserine occurs at positions 252 and 255. The span at 285–300 shows a compositional bias: low complexity; sequence WSSYQSPSPTPSSSWS. Gly residues predominate over residues 301–313; sequence PGGGGYGGWGGSQ. At T326 the chain carries Phosphothreonine. S330 and S332 each carry phosphoserine. RRM domains are found at residues 472–563 and 580–662; these read RKVF…PWNL and KTIF…PYVL. The RNA-binding stretch occupies residues 541–543; sequence KLY. 8 residues coordinate Zn(2+): C667, C675, C684, C689, C694, C697, H702, and H710.

The protein belongs to the RRM CPEB family. As to quaternary structure, interacts with TOB1. Expressed in pancreas in islets and ductal cells (at protein level). Expressed in melanocytes.

Its subcellular location is the cytoplasm. It is found in the cell projection. The protein resides in the dendrite. The protein localises to the dendritic spine. It localises to the postsynaptic density. Its subcellular location is the axon. It is found in the growth cone. The protein resides in the endoplasmic reticulum. The protein localises to the perinuclear region. Its function is as follows. Sequence-specific RNA-binding protein that binds to the cytoplasmic polyadenylation element (CPE), an uridine-rich sequence element (consensus sequence 5'-UUUUUAU-3') within the mRNA 3'-UTR. RNA binding results in a clear conformational change analogous to the Venus fly trap mechanism. Regulates activation of unfolded protein response (UPR) in the process of adaptation to ER stress in liver, by maintaining translation of CPE-regulated mRNAs in conditions in which global protein synthesis is inhibited. Required for cell cycle progression, specifically for cytokinesis and chromosomal segregation. Plays a role as an oncogene promoting tumor growth and progression by positively regulating translation of t-plasminogen activator/PLAT. Stimulates proliferation of melanocytes. In contrast to CPEB1 and CPEB3, does not play role in synaptic plasticity, learning and memory. This is Cytoplasmic polyadenylation element-binding protein 4 (CPEB4) from Homo sapiens (Human).